Reading from the N-terminus, the 430-residue chain is Glutamyl-tRNA reductase (430 aa).

Residues 50-53, Ser108, 113-115, and Gln119 contribute to the substrate site; these read TCNR and EPQ. Cys51 serves as the catalytic Nucleophile. 188-193 is an NADP(+) binding site; the sequence is GAGEMA.

This sequence belongs to the glutamyl-tRNA reductase family. Homodimer.

It carries out the reaction (S)-4-amino-5-oxopentanoate + tRNA(Glu) + NADP(+) = L-glutamyl-tRNA(Glu) + NADPH + H(+). Its pathway is porphyrin-containing compound metabolism; protoporphyrin-IX biosynthesis; 5-aminolevulinate from L-glutamyl-tRNA(Glu): step 1/2. Its function is as follows. Catalyzes the NADPH-dependent reduction of glutamyl-tRNA(Glu) to glutamate 1-semialdehyde (GSA). The chain is Glutamyl-tRNA reductase from Desulfovibrio desulfuricans (strain ATCC 27774 / DSM 6949 / MB).